A 614-amino-acid polypeptide reads, in one-letter code: Acetylcholinesterase (614 aa).

Residues 1–31 (MRPPWYPLHTPSLAFPLLFLLLSLLGGGARA) form the signal peptide. Cysteines 100 and 127 form a disulfide. S234 functions as the Acyl-ester intermediate in the catalytic mechanism. A disulfide bridge links C288 with C303. N-linked (GlcNAc...) asparagine glycosylation is present at N296. E365 functions as the Charge relay system in the catalytic mechanism. A glycan (N-linked (GlcNAc...) asparagine) is linked at N381. A disulfide bridge connects residues C440 and C560. The active-site Charge relay system is H478. Residue N495 is glycosylated (N-linked (GlcNAc...) asparagine).

Belongs to the type-B carboxylesterase/lipase family. In terms of assembly, isoform H generates GPI-anchored dimers; disulfide linked. Isoform T generates multiple structures, ranging from monomers and dimers to collagen-tailed and hydrophobic-tailed forms, in which catalytic tetramers are associated with anchoring proteins that attach them to the basal lamina or to cell membranes. In the collagen-tailed forms, isoform T subunits are associated with a specific collagen, COLQ, which triggers the formation of isoform T tetramers, from monomers and dimers. Interacts with PRIMA1. The interaction with PRIMA1 is required to anchor it to the basal lamina of cells and organize into tetramers. Predominates in most expressing tissues except erythrocytes where a glycophospholipid-attached form of ACHE predominates.

It localises to the synapse. The protein resides in the secreted. Its subcellular location is the cell membrane. It catalyses the reaction acetylcholine + H2O = choline + acetate + H(+). Terminates signal transduction at the neuromuscular junction by rapid hydrolysis of the acetylcholine released into the synaptic cleft. The protein is Acetylcholinesterase (Ache) of Mus musculus (Mouse).